Here is a 364-residue protein sequence, read N- to C-terminus: Probable dual-specificity RNA methyltransferase RlmN (364 aa).

Glutamate 107 acts as the Proton acceptor in catalysis. The region spanning 113 to 346 is the Radical SAM core domain; the sequence is HDYGNSVCVT…ATIRREQGSD (234 aa). A disulfide bridge connects residues cysteine 120 and cysteine 351. [4Fe-4S] cluster-binding residues include cysteine 127, cysteine 131, and cysteine 134. Residues 177-178, serine 209, 232-234, and asparagine 308 contribute to the S-adenosyl-L-methionine site; these read GE and SLH. The active-site S-methylcysteine intermediate is cysteine 351.

The protein belongs to the radical SAM superfamily. RlmN family. It depends on [4Fe-4S] cluster as a cofactor.

It is found in the cytoplasm. It catalyses the reaction adenosine(2503) in 23S rRNA + 2 reduced [2Fe-2S]-[ferredoxin] + 2 S-adenosyl-L-methionine = 2-methyladenosine(2503) in 23S rRNA + 5'-deoxyadenosine + L-methionine + 2 oxidized [2Fe-2S]-[ferredoxin] + S-adenosyl-L-homocysteine. The catalysed reaction is adenosine(37) in tRNA + 2 reduced [2Fe-2S]-[ferredoxin] + 2 S-adenosyl-L-methionine = 2-methyladenosine(37) in tRNA + 5'-deoxyadenosine + L-methionine + 2 oxidized [2Fe-2S]-[ferredoxin] + S-adenosyl-L-homocysteine. Specifically methylates position 2 of adenine 2503 in 23S rRNA and position 2 of adenine 37 in tRNAs. Confers resistance to some classes of antibiotics. This Staphylococcus aureus (strain bovine RF122 / ET3-1) protein is Probable dual-specificity RNA methyltransferase RlmN.